We begin with the raw amino-acid sequence, 113 residues long: Putative membrane protein insertion efficiency factor (113 aa).

The protein belongs to the UPF0161 family.

Its subcellular location is the cell inner membrane. Could be involved in insertion of integral membrane proteins into the membrane. This is Putative membrane protein insertion efficiency factor from Campylobacter curvus (strain 525.92).